The sequence spans 574 residues: Probable inactive serine/threonine-protein kinase slob2 (574 aa).

A helical membrane pass occupies residues 6–26 (YIIIAAVGGFAILTFIIIVVL). In terms of domain architecture, Protein kinase spans 166-346 (YADRGSLRDF…PLHRLTYTSR (181 aa)). N-linked (GlcNAc...) asparagine glycosylation is present at Asn358. Residues 366–386 (SKPNSKDLSQPKLKDLKKQKK) are disordered. Asn440, Asn449, Asn453, Asn456, Asn464, Asn470, Asn477, and Asn483 each carry an N-linked (GlcNAc...) asparagine glycan. Residues 450-493 (TTTNTTNTSTSSSLNSSFNSNVSTSYSNATTTTNTTSASSVSPP) are compositionally biased toward low complexity. The disordered stretch occupies residues 450–574 (TTTNTTNTST…DKSGPLLKKS (125 aa)). Positions 494–539 (ISSPPPPPPPPPPSKSSGPPPPPPPPPKSSGPPPPPPPKSSPPPPA) are enriched in pro residues. Low complexity predominate over residues 546–556 (LLSSIESFSSS).

Belongs to the protein kinase superfamily. Ser/Thr protein kinase family.

The protein resides in the membrane. This Dictyostelium discoideum (Social amoeba) protein is Probable inactive serine/threonine-protein kinase slob2 (slob2).